The primary structure comprises 146 residues: UPF0742 protein PB2B2.17c (146 aa).

A helical membrane pass occupies residues 38 to 60 (LTVKYCLAVKLLIYLLYCWYIYS).

This sequence belongs to the UPF0742 family.

It is found in the cytoplasm. The protein resides in the nucleus membrane. This Schizosaccharomyces pombe (strain 972 / ATCC 24843) (Fission yeast) protein is UPF0742 protein PB2B2.17c.